Here is a 77-residue protein sequence, read N- to C-terminus: Acyl carrier protein (77 aa).

A Carrier domain is found at 1 to 76; sequence MSLEDDVKAI…DVIKYIQERQ (76 aa). Serine 36 carries the post-translational modification O-(pantetheine 4'-phosphoryl)serine.

The protein belongs to the acyl carrier protein (ACP) family. Post-translationally, 4'-phosphopantetheine is transferred from CoA to a specific serine of apo-ACP by AcpS. This modification is essential for activity because fatty acids are bound in thioester linkage to the sulfhydryl of the prosthetic group.

The protein resides in the cytoplasm. Its pathway is lipid metabolism; fatty acid biosynthesis. In terms of biological role, carrier of the growing fatty acid chain in fatty acid biosynthesis. This chain is Acyl carrier protein, found in Chlamydia muridarum (strain MoPn / Nigg).